The chain runs to 410 residues: LL-diaminopimelate aminotransferase (410 aa).

Tyr-15 and Gly-42 together coordinate substrate. Pyridoxal 5'-phosphate-binding positions include Tyr-72, 108 to 109, Tyr-132, Asn-188, Tyr-219, and 247 to 249; these read AK and SFS. The substrate site is built by Lys-109, Tyr-132, and Asn-188. N6-(pyridoxal phosphate)lysine is present on Lys-250. Residues Arg-258 and Asn-293 each coordinate pyridoxal 5'-phosphate. Residues Asn-293 and Arg-389 each contribute to the substrate site.

The protein belongs to the class-I pyridoxal-phosphate-dependent aminotransferase family. LL-diaminopimelate aminotransferase subfamily. Homodimer. Pyridoxal 5'-phosphate serves as cofactor.

It carries out the reaction (2S,6S)-2,6-diaminopimelate + 2-oxoglutarate = (S)-2,3,4,5-tetrahydrodipicolinate + L-glutamate + H2O + H(+). It participates in amino-acid biosynthesis; L-lysine biosynthesis via DAP pathway; LL-2,6-diaminopimelate from (S)-tetrahydrodipicolinate (aminotransferase route): step 1/1. In terms of biological role, involved in the synthesis of meso-diaminopimelate (m-DAP or DL-DAP), required for both lysine and peptidoglycan biosynthesis. Catalyzes the direct conversion of tetrahydrodipicolinate to LL-diaminopimelate. In Bacteroides fragilis (strain YCH46), this protein is LL-diaminopimelate aminotransferase.